A 91-amino-acid polypeptide reads, in one-letter code: Conotoxin Im9.1 (91 aa).

An N-terminal signal peptide occupies residues 1-23 (MSKVGVVPLIFLVLLSIAALQNG). A propeptide spanning residues 24–55 (DDPRRQRDEKQSPQGDILRSTLTKYSYNIQRR) is cleaved from the precursor. Intrachain disulfides connect C56–C72, C63–C83, and C66–C86.

It belongs to the conotoxin M superfamily. Expressed by the venom duct.

Its subcellular location is the secreted. Functionally, probable neurotoxin. The sequence is that of Conotoxin Im9.1 from Conus imperialis (Imperial cone).